Here is a 421-residue protein sequence, read N- to C-terminus: ATP-dependent RNA helicase RhlB (421 aa).

The Q motif motif lies at 9 to 37; sequence THFADLPINEQVVKALSAANFSHCTPIQA. In terms of domain architecture, Helicase ATP-binding spans 40–216; the sequence is LPPLLEGNDI…YEHMDNPTHV (177 aa). 53 to 60 contributes to the ATP binding site; that stretch reads AQTGTGKT. The DEAD box motif lies at 162-165; the sequence is DEAD. In terms of domain architecture, Helicase C-terminal spans 240–387; the sequence is KMALLLSLME…VTEYQADALL (148 aa). A disordered region spans residues 389-421; it reads DVTPPKPRHKKRMQNGRNPQKRQSSGSRNRRKP. Residues 403–415 are compositionally biased toward polar residues; it reads NGRNPQKRQSSGS.

This sequence belongs to the DEAD box helicase family. RhlB subfamily. In terms of assembly, component of the RNA degradosome, which is a multiprotein complex involved in RNA processing and mRNA degradation.

Its subcellular location is the cytoplasm. The catalysed reaction is ATP + H2O = ADP + phosphate + H(+). In terms of biological role, DEAD-box RNA helicase involved in RNA degradation. Has RNA-dependent ATPase activity and unwinds double-stranded RNA. This is ATP-dependent RNA helicase RhlB from Pseudoalteromonas atlantica (strain T6c / ATCC BAA-1087).